The sequence spans 92 residues: DNA-directed RNA polymerase subunit Rpo11 (92 aa).

This sequence belongs to the archaeal Rpo11/eukaryotic RPB11/RPC19 RNA polymerase subunit family. In terms of assembly, part of the RNA polymerase complex.

Its subcellular location is the cytoplasm. The catalysed reaction is RNA(n) + a ribonucleoside 5'-triphosphate = RNA(n+1) + diphosphate. Functionally, DNA-dependent RNA polymerase (RNAP) catalyzes the transcription of DNA into RNA using the four ribonucleoside triphosphates as substrates. This is DNA-directed RNA polymerase subunit Rpo11 from Methanosarcina acetivorans (strain ATCC 35395 / DSM 2834 / JCM 12185 / C2A).